Reading from the N-terminus, the 215-residue chain is ER lumen protein-retaining receptor 3 (215 aa).

Residues Met-1–Phe-4 are Lumenal-facing. Residues Arg-5–Trp-24 form a helical membrane-spanning segment. Over Arg-25–Ile-32 the chain is Cytoplasmic. Residues Ser-33 to Phe-52 form a helical membrane-spanning segment. The interval Arg-47–Tyr-48 is interaction with the K-D-E-L motif on target proteins. The Lumenal portion of the chain corresponds to Thr-53–Ala-58. A helical membrane pass occupies residues Tyr-59 to Phe-79. The Cytoplasmic portion of the chain corresponds to Phe-80 to Ser-92. The chain crosses the membrane as a helical span at residues Phe-93–Asn-110. At Tyr-111–Leu-116 the chain is on the lumenal side. The chain crosses the membrane as a helical span at residues Glu-117–Leu-135. At Phe-136–Ala-149 the chain is on the cytoplasmic side. The chain crosses the membrane as a helical span at residues His-150 to Trp-168. Residues Arg-159–Arg-169 form an interaction with the K-D-E-L motif on target proteins region. Over Arg-169–Gln-178 the chain is Lumenal. The chain crosses the membrane as a helical span at residues Ile-179–Phe-199. At Thr-200–Val-215 the chain is on the cytoplasmic side. Residues Arg-204–Lys-208 form an important for recycling of cargo proteins with the sequence motif K-D-E-L from the Golgi to the endoplasmic reticulum region.

The protein belongs to the ERD2 family.

Its subcellular location is the endoplasmic reticulum membrane. It is found in the golgi apparatus membrane. It localises to the cytoplasmic vesicle. The protein localises to the COPI-coated vesicle membrane. In terms of biological role, receptor for the C-terminal sequence motif K-D-E-L that is present on endoplasmic reticulum resident proteins and that mediates their recycling from the Golgi back to the endoplasmic reticulum. The chain is ER lumen protein-retaining receptor 3 (kdelr3) from Danio rerio (Zebrafish).